Consider the following 231-residue polypeptide: 5'-methylthioadenosine/S-adenosylhomocysteine nucleosidase (231 aa).

Glutamate 13 (proton acceptor) is an active-site residue. Substrate-binding positions include glycine 79, methionine 154, and methionine 175–glutamate 176. Residue aspartate 199 is the Proton donor of the active site.

The protein belongs to the PNP/UDP phosphorylase family. MtnN subfamily.

It catalyses the reaction S-adenosyl-L-homocysteine + H2O = S-(5-deoxy-D-ribos-5-yl)-L-homocysteine + adenine. It carries out the reaction S-methyl-5'-thioadenosine + H2O = 5-(methylsulfanyl)-D-ribose + adenine. The catalysed reaction is 5'-deoxyadenosine + H2O = 5-deoxy-D-ribose + adenine. It participates in amino-acid biosynthesis; L-methionine biosynthesis via salvage pathway; S-methyl-5-thio-alpha-D-ribose 1-phosphate from S-methyl-5'-thioadenosine (hydrolase route): step 1/2. Its function is as follows. Catalyzes the irreversible cleavage of the glycosidic bond in both 5'-methylthioadenosine (MTA) and S-adenosylhomocysteine (SAH/AdoHcy) to adenine and the corresponding thioribose, 5'-methylthioribose and S-ribosylhomocysteine, respectively. Also cleaves 5'-deoxyadenosine, a toxic by-product of radical S-adenosylmethionine (SAM) enzymes, into 5-deoxyribose and adenine. This chain is 5'-methylthioadenosine/S-adenosylhomocysteine nucleosidase, found in Marinomonas sp. (strain MWYL1).